Consider the following 299-residue polypeptide: ATP phosphoribosyltransferase (299 aa).

The protein belongs to the ATP phosphoribosyltransferase family. Long subfamily. The cofactor is Mg(2+).

It is found in the cytoplasm. The enzyme catalyses 1-(5-phospho-beta-D-ribosyl)-ATP + diphosphate = 5-phospho-alpha-D-ribose 1-diphosphate + ATP. It functions in the pathway amino-acid biosynthesis; L-histidine biosynthesis; L-histidine from 5-phospho-alpha-D-ribose 1-diphosphate: step 1/9. Feedback inhibited by histidine. Catalyzes the condensation of ATP and 5-phosphoribose 1-diphosphate to form N'-(5'-phosphoribosyl)-ATP (PR-ATP). Has a crucial role in the pathway because the rate of histidine biosynthesis seems to be controlled primarily by regulation of HisG enzymatic activity. The chain is ATP phosphoribosyltransferase from Rhodopirellula baltica (strain DSM 10527 / NCIMB 13988 / SH1).